Reading from the N-terminus, the 50-residue chain is Toxic protein HokE (50 aa).

A helical transmembrane segment spans residues 5-25 (YALAAVIVLCLTVLGFTLLVG).

Belongs to the Hok/Gef family.

The protein localises to the cell inner membrane. Functionally, toxic component of a type I toxin-antitoxin (TA) system; if it expressed it could be neutralized by antisense antitoxin RNA SokE. This Escherichia coli (strain K12) protein is Toxic protein HokE.